We begin with the raw amino-acid sequence, 273 residues long: Rho GTPase-activating protein gacB (273 aa).

The region spanning 1-192 is the Rho-GAP domain; that stretch reads MTDQTLRLEN…YLISHFNEIF (192 aa).

The protein localises to the cytoplasm. In terms of biological role, rho GTPase-activating protein involved in the signal transduction pathway. This Dictyostelium discoideum (Social amoeba) protein is Rho GTPase-activating protein gacB (gacB).